A 70-amino-acid chain; its full sequence is uncharacterized protein (70 aa).

This is an uncharacterized protein from Swinepox virus (strain Kasza) (SWPV).